The sequence spans 309 residues: Methionyl-tRNA formyltransferase (309 aa).

Position 109 to 112 (109 to 112 (SLLP)) interacts with (6S)-5,6,7,8-tetrahydrofolate.

This sequence belongs to the Fmt family.

It carries out the reaction L-methionyl-tRNA(fMet) + (6R)-10-formyltetrahydrofolate = N-formyl-L-methionyl-tRNA(fMet) + (6S)-5,6,7,8-tetrahydrofolate + H(+). Functionally, attaches a formyl group to the free amino group of methionyl-tRNA(fMet). The formyl group appears to play a dual role in the initiator identity of N-formylmethionyl-tRNA by promoting its recognition by IF2 and preventing the misappropriation of this tRNA by the elongation apparatus. The polypeptide is Methionyl-tRNA formyltransferase (Thiobacillus denitrificans (strain ATCC 25259 / T1)).